Consider the following 469-residue polypeptide: Glutamine synthetase (469 aa).

The GS beta-grasp domain occupies 13 to 97 (HEVKFVDLRF…IRCDILEPGT (85 aa)). A GS catalytic domain is found at 105–469 (PRSIAKRAED…PVEFELYYSV (365 aa)). The Mg(2+) site is built by glutamate 130 and glutamate 132. Residue glutamate 208 participates in ATP binding. Positions 213 and 221 each coordinate Mg(2+). L-glutamate contacts are provided by residues 265–266 (NG) and glycine 266. Histidine 270 contributes to the Mg(2+) binding site. ATP contacts are provided by residues 272-274 (HMS) and serine 274. L-glutamate-binding residues include arginine 322, glutamate 328, and arginine 340. 3 residues coordinate ATP: arginine 340, arginine 345, and lysine 353. A Mg(2+)-binding site is contributed by glutamate 358. Arginine 360 provides a ligand contact to L-glutamate. Position 398 is an O-AMP-tyrosine (tyrosine 398).

The protein belongs to the glutamine synthetase family. As to quaternary structure, oligomer of 12 subunits arranged in the form of two hexameric ring. The cofactor is Mg(2+).

The protein localises to the cytoplasm. The enzyme catalyses L-glutamate + NH4(+) + ATP = L-glutamine + ADP + phosphate + H(+). With respect to regulation, the activity of this enzyme could be controlled by adenylation under conditions of abundant glutamine. Catalyzes the ATP-dependent biosynthesis of glutamine from glutamate and ammonia. The chain is Glutamine synthetase from Escherichia coli O157:H7.